The chain runs to 301 residues: Sulfate adenylyltransferase subunit 2 2 (301 aa).

The protein belongs to the PAPS reductase family. CysD subfamily. In terms of assembly, heterodimer composed of CysD, the smaller subunit, and CysN.

It carries out the reaction sulfate + ATP + H(+) = adenosine 5'-phosphosulfate + diphosphate. The protein operates within sulfur metabolism; hydrogen sulfide biosynthesis; sulfite from sulfate: step 1/3. Functionally, with CysN forms the ATP sulfurylase (ATPS) that catalyzes the adenylation of sulfate producing adenosine 5'-phosphosulfate (APS) and diphosphate, the first enzymatic step in sulfur assimilation pathway. APS synthesis involves the formation of a high-energy phosphoric-sulfuric acid anhydride bond driven by GTP hydrolysis by CysN coupled to ATP hydrolysis by CysD. This chain is Sulfate adenylyltransferase subunit 2 2, found in Shewanella sediminis (strain HAW-EB3).